A 138-amino-acid polypeptide reads, in one-letter code: Acidic phospholipase A2 Cvv-E6a (138 aa).

Positions 1–16 are cleaved as a signal peptide; sequence MRTLWIVAVLLLGVEG. Intrachain disulfides connect C42–C131, C44–C60, C59–C111, C65–C138, C66–C104, C73–C97, and C91–C102. Residues Y43, G45, and G47 each coordinate Ca(2+). H63 is a catalytic residue. D64 contacts Ca(2+). The active site involves D105.

This sequence belongs to the phospholipase A2 family. Group II subfamily. D49 sub-subfamily. It depends on Ca(2+) as a cofactor. In terms of tissue distribution, expressed by the venom gland.

The protein resides in the secreted. The enzyme catalyses a 1,2-diacyl-sn-glycero-3-phosphocholine + H2O = a 1-acyl-sn-glycero-3-phosphocholine + a fatty acid + H(+). In terms of biological role, snake venom phospholipase A2 (PLA2) that significantly inhibits ADP-induced platelet aggregation in platelet-rich plasma of human, rabbit and guinea pig. PLA2 catalyzes the calcium-dependent hydrolysis of the 2-acyl groups in 3-sn-phosphoglycerides. This is Acidic phospholipase A2 Cvv-E6a from Crotalus viridis viridis (Prairie rattlesnake).